We begin with the raw amino-acid sequence, 107 residues long: Nucleoid-associated protein RT0857 (107 aa).

Belongs to the YbaB/EbfC family. Homodimer.

The protein localises to the cytoplasm. It is found in the nucleoid. Binds to DNA and alters its conformation. May be involved in regulation of gene expression, nucleoid organization and DNA protection. The protein is Nucleoid-associated protein RT0857 of Rickettsia typhi (strain ATCC VR-144 / Wilmington).